The primary structure comprises 124 residues: Putative outer membrane protein CT_569 (124 aa).

Residues 1-31 (MKKTKKRKQSITLVEMMVVITLIGIIGGALA) form the signal peptide.

It is found in the cell outer membrane. The protein is Putative outer membrane protein CT_569 of Chlamydia trachomatis serovar D (strain ATCC VR-885 / DSM 19411 / UW-3/Cx).